A 526-amino-acid chain; its full sequence is Tyrosine-protein kinase transforming protein Src (526 aa).

Over residues 1–15 (MGSSKSKPKGPSQRR) the composition is skewed to basic residues. Positions 1 to 59 (MGSSKSKPKGPSQRRRSLEPPDSTHHGGFPASQTPNKTAAPDTHRTPSRSFGTVATEPK) are disordered. The N-myristoyl glycine; by host moiety is linked to residue glycine 2. Residues 16-25 (RSLEPPDSTH) are compositionally biased toward basic and acidic residues. The 62-residue stretch at 81–142 (GGVTTFVALY…PSNYVAPSDS (62 aa)) folds into the SH3 domain. One can recognise an SH2 domain in the interval 148-245 (WYFGKITRRE…GLCHRLTNVC (98 aa)). The Protein kinase domain occupies 267 to 517 (LRLEVKLGQG…TFEYLQAQLL (251 aa)). ATP contacts are provided by residues 273–281 (LGQGCFGEV) and lysine 295. The active-site Proton acceptor is the aspartate 386. Phosphotyrosine; by autocatalysis is present on tyrosine 416.

It belongs to the protein kinase superfamily. Tyr protein kinase family. SRC subfamily. Homodimer. In terms of processing, the phosphorylated form is termed pp60v-src.

It catalyses the reaction L-tyrosyl-[protein] + ATP = O-phospho-L-tyrosyl-[protein] + ADP + H(+). Functionally, this phosphoprotein, required for both the initiation and the maintenance of neoplastic transformation, is a protein kinase that catalyzes the phosphorylation of tyrosine residues in vitro. In Rous sarcoma virus subgroup E (strain Schmidt-Ruppin) (RSV-SR-E), this protein is Tyrosine-protein kinase transforming protein Src (V-SRC).